Consider the following 153-residue polypeptide: Ribosomal RNA large subunit methyltransferase H (153 aa).

S-adenosyl-L-methionine is bound by residues Leu70, Gly102, and Leu121 to Phe126.

Belongs to the RNA methyltransferase RlmH family. As to quaternary structure, homodimer.

Its subcellular location is the cytoplasm. The enzyme catalyses pseudouridine(1915) in 23S rRNA + S-adenosyl-L-methionine = N(3)-methylpseudouridine(1915) in 23S rRNA + S-adenosyl-L-homocysteine + H(+). In terms of biological role, specifically methylates the pseudouridine at position 1915 (m3Psi1915) in 23S rRNA. The sequence is that of Ribosomal RNA large subunit methyltransferase H from Dictyoglomus thermophilum (strain ATCC 35947 / DSM 3960 / H-6-12).